We begin with the raw amino-acid sequence, 201 residues long: CASP-like protein 2D1 (201 aa).

Residues 1–26 (MRSGEGSTAAAAAAEEEKVKVAAPFR) lie on the Cytoplasmic side of the membrane. A helical transmembrane segment spans residues 27–47 (LAELGLRVCAVPLAVASVWEM). Residues 48 to 70 (ATNKQVDETYGEVRFSDLSGFRY) are Extracellular-facing. A helical transmembrane segment spans residues 71–91 (LVWINAITAAYSVASILLSSC). Residues 92 to 98 (RFITRFD) are Cytoplasmic-facing. A helical membrane pass occupies residues 99–119 (WLIFILDQASAYLLLTSASAA). Residues 120 to 148 (AEVVYLAREGDREVSWGEVCSYFGRFCGA) are Extracellular-facing. The chain crosses the membrane as a helical span at residues 149 to 169 (ATVSVALNAAALLCFMALSLI). Residues 170–201 (SAFRVFTKFNPPSQSNSKQQLSQEQGKPVVSG) are Cytoplasmic-facing. A compositionally biased stretch (polar residues) spans 180-194 (PPSQSNSKQQLSQEQ). Positions 180-201 (PPSQSNSKQQLSQEQGKPVVSG) are disordered.

This sequence belongs to the Casparian strip membrane proteins (CASP) family. Homodimer and heterodimers.

The protein localises to the cell membrane. The sequence is that of CASP-like protein 2D1 from Oryza sativa subsp. indica (Rice).